The chain runs to 216 residues: Probable GTP-binding protein EngB (216 aa).

The region spanning 27-201 (EGIEVAFAGR…SQKLNTWFNE (175 aa)) is the EngB-type G domain. Residues 35 to 42 (GRSNAGKS), 62 to 66 (GRTQL), 80 to 83 (DLPG), 147 to 150 (TKAD), and 180 to 182 (FSS) each bind GTP. Positions 42 and 64 each coordinate Mg(2+).

It belongs to the TRAFAC class TrmE-Era-EngA-EngB-Septin-like GTPase superfamily. EngB GTPase family. Mg(2+) is required as a cofactor.

Functionally, necessary for normal cell division and for the maintenance of normal septation. This Serratia proteamaculans (strain 568) protein is Probable GTP-binding protein EngB.